A 347-amino-acid polypeptide reads, in one-letter code: Phenylalanine--tRNA ligase alpha subunit (347 aa).

A Mg(2+)-binding site is contributed by Glu265.

Belongs to the class-II aminoacyl-tRNA synthetase family. Phe-tRNA synthetase alpha subunit type 1 subfamily. In terms of assembly, tetramer of two alpha and two beta subunits. Mg(2+) serves as cofactor.

The protein resides in the cytoplasm. It carries out the reaction tRNA(Phe) + L-phenylalanine + ATP = L-phenylalanyl-tRNA(Phe) + AMP + diphosphate + H(+). The sequence is that of Phenylalanine--tRNA ligase alpha subunit from Mycolicibacterium gilvum (strain PYR-GCK) (Mycobacterium gilvum (strain PYR-GCK)).